The primary structure comprises 315 residues: Ribosomal RNA small subunit methyltransferase H (315 aa).

S-adenosyl-L-methionine is bound by residues 36-38 (GGH), aspartate 56, phenylalanine 80, aspartate 102, and glutamine 109.

Belongs to the methyltransferase superfamily. RsmH family.

Its subcellular location is the cytoplasm. It carries out the reaction cytidine(1402) in 16S rRNA + S-adenosyl-L-methionine = N(4)-methylcytidine(1402) in 16S rRNA + S-adenosyl-L-homocysteine + H(+). In terms of biological role, specifically methylates the N4 position of cytidine in position 1402 (C1402) of 16S rRNA. This is Ribosomal RNA small subunit methyltransferase H from Proteus mirabilis (strain HI4320).